The sequence spans 550 residues: Probable asparagine synthetase [glutamine-hydrolyzing] (550 aa).

Catalysis depends on cysteine 2, which acts as the For GATase activity. A Glutamine amidotransferase type-2 domain is found at 2–189; the sequence is CGIICFIQYG…PNQYVTIDLS (188 aa). Residues 53–57, 78–80, and aspartate 100 each bind L-glutamine; these read RLAIM and NGE. The Asparagine synthetase domain occupies 213-530; the sequence is YYQSHKSLID…GGRDHIIPHY (318 aa). ATP-binding positions include leucine 256, valine 284, and 360 to 361; that span reads SG.

It carries out the reaction L-aspartate + L-glutamine + ATP + H2O = L-asparagine + L-glutamate + AMP + diphosphate + H(+). It functions in the pathway amino-acid biosynthesis; L-asparagine biosynthesis; L-asparagine from L-aspartate (L-Gln route): step 1/1. The protein is Probable asparagine synthetase [glutamine-hydrolyzing] of Acanthamoeba polyphaga mimivirus (APMV).